The following is a 459-amino-acid chain: Exodeoxyribonuclease 7 large subunit (459 aa).

Belongs to the XseA family. As to quaternary structure, heterooligomer composed of large and small subunits.

The protein localises to the cytoplasm. It carries out the reaction Exonucleolytic cleavage in either 5'- to 3'- or 3'- to 5'-direction to yield nucleoside 5'-phosphates.. Functionally, bidirectionally degrades single-stranded DNA into large acid-insoluble oligonucleotides, which are then degraded further into small acid-soluble oligonucleotides. This chain is Exodeoxyribonuclease 7 large subunit, found in Pseudomonas putida (strain ATCC 47054 / DSM 6125 / CFBP 8728 / NCIMB 11950 / KT2440).